The following is a 143-amino-acid chain: Large ribosomal subunit protein uL11 (143 aa).

The protein belongs to the universal ribosomal protein uL11 family. Part of the ribosomal stalk of the 50S ribosomal subunit. Interacts with L10 and the large rRNA to form the base of the stalk. L10 forms an elongated spine to which L12 dimers bind in a sequential fashion forming a multimeric L10(L12)X complex. In terms of processing, one or more lysine residues are methylated.

Functionally, forms part of the ribosomal stalk which helps the ribosome interact with GTP-bound translation factors. The sequence is that of Large ribosomal subunit protein uL11 from Kineococcus radiotolerans (strain ATCC BAA-149 / DSM 14245 / SRS30216).